The primary structure comprises 179 residues: Large ribosomal subunit protein uL6 (179 aa).

The protein belongs to the universal ribosomal protein uL6 family. In terms of assembly, part of the 50S ribosomal subunit.

This protein binds to the 23S rRNA, and is important in its secondary structure. It is located near the subunit interface in the base of the L7/L12 stalk, and near the tRNA binding site of the peptidyltransferase center. The chain is Large ribosomal subunit protein uL6 from Nocardia farcinica (strain IFM 10152).